The chain runs to 261 residues: Ribosome biogenesis protein nsa2 (261 aa).

Composition is skewed to basic and acidic residues over residues 1-36 (MPQNEYIERAQKLHGKRLDTEERARKKAAREGHKQS) and 66-82 (KQHEERNVKGAPEEKDP). 2 disordered regions span residues 1-44 (MPQN…NLRG) and 64-97 (AIKQHEERNVKGAPEEKDPSNPVPAYLLDRSNPT). Residues 15–22 (GKRLDTEE) carry the Nuclear localization signal motif.

Belongs to the eukaryotic ribosomal protein eS8 family. Ribosome biogenesis protein NSA2 subfamily. In terms of assembly, component of the pre-66S ribosomal particle. Interacts with nop7 and rrp1. Interacts with rsa4 (via WD repeats).

The protein resides in the nucleus. Its subcellular location is the nucleolus. In terms of biological role, involved in the biogenesis of the 60S ribosomal subunit. May play a part in the quality control of pre-60S particles. This is Ribosome biogenesis protein nsa2 (rbg-52) from Neurospora crassa (strain ATCC 24698 / 74-OR23-1A / CBS 708.71 / DSM 1257 / FGSC 987).